The primary structure comprises 470 residues: Neuraminidase (470 aa).

Residues 1 to 14 (MNPNQKIIAIGSAS) lie on the Intravirion side of the membrane. An involved in apical transport and lipid raft association region spans residues 11–32 (GSASLGILILNVILHVVSIIVT). Residues 15 to 35 (LGILILNVILHVVSIIVTVLV) traverse the membrane as a helical segment. A hypervariable stalk region region spans residues 32–86 (TVLVLNNNGTGLYCNGTIIREYNETVRVERITQWYNTNTIEYIERPSNEYYMNNT). At 36 to 470 (LNNNGTGLYC…AILPFDIDKM (435 aa)) the chain is on the virion surface side. 4 N-linked (GlcNAc...) asparagine; by host glycosylation sites follow: Asn-39, Asn-46, Asn-54, and Asn-84. Residues 89–470 (LCEAQGFAPF…AILPFDIDKM (382 aa)) form a head of neuraminidase region. 8 disulfide bridges follow: Cys-90-Cys-417, Cys-122-Cys-127, Cys-182-Cys-229, Cys-231-Cys-236, Cys-277-Cys-290, Cys-279-Cys-288, Cys-316-Cys-335, and Cys-421-Cys-446. Position 116 (Arg-116) interacts with substrate. Residue Asn-144 is glycosylated (N-linked (GlcNAc...) asparagine; by host). Asp-149 acts as the Proton donor/acceptor in catalysis. Arg-150 is a substrate binding site. 275–276 (EE) serves as a coordination point for substrate. A substrate-binding site is contributed by Arg-291. Asp-292 contributes to the Ca(2+) binding site. An N-linked (GlcNAc...) asparagine; by host glycan is attached at Asn-293. The Ca(2+) site is built by Gly-296 and Asp-322. Position 368 (Arg-368) interacts with substrate. An N-linked (GlcNAc...) asparagine; by host glycan is attached at Asn-398. The active-site Nucleophile is the Tyr-402.

This sequence belongs to the glycosyl hydrolase 34 family. Homotetramer. The cofactor is Ca(2+). N-glycosylated.

The protein resides in the virion membrane. Its subcellular location is the host apical cell membrane. The catalysed reaction is Hydrolysis of alpha-(2-&gt;3)-, alpha-(2-&gt;6)-, alpha-(2-&gt;8)- glycosidic linkages of terminal sialic acid residues in oligosaccharides, glycoproteins, glycolipids, colominic acid and synthetic substrates.. Inhibited by the neuraminidase inhibitors zanamivir (Relenza) and oseltamivir (Tamiflu). These drugs interfere with the release of progeny virus from infected cells and are effective against all influenza strains. Resistance to neuraminidase inhibitors is quite rare. Its function is as follows. Catalyzes the removal of terminal sialic acid residues from viral and cellular glycoconjugates. Cleaves off the terminal sialic acids on the glycosylated HA during virus budding to facilitate virus release. Additionally helps virus spread through the circulation by further removing sialic acids from the cell surface. These cleavages prevent self-aggregation and ensure the efficient spread of the progeny virus from cell to cell. Otherwise, infection would be limited to one round of replication. Described as a receptor-destroying enzyme because it cleaves a terminal sialic acid from the cellular receptors. May facilitate viral invasion of the upper airways by cleaving the sialic acid moieties on the mucin of the airway epithelial cells. Likely to plays a role in the budding process through its association with lipid rafts during intracellular transport. May additionally display a raft-association independent effect on budding. Plays a role in the determination of host range restriction on replication and virulence. Sialidase activity in late endosome/lysosome traffic seems to enhance virus replication. The polypeptide is Neuraminidase (Influenza A virus (strain A/Equine/New Market/1979 H3N8)).